The sequence spans 464 residues: Protein FAM90A16 (464 aa).

3 disordered regions span residues 1-42, 70-389, and 415-437; these read MMAR…DPRL, PATL…HDGA, and HSPEKPGAFLAQSPHVSEKSEAP. 2 stretches are compositionally biased toward basic and acidic residues: residues 74-89 and 97-114; these read GKKEGKENLKPWKPRV and NKDKGEKEERPRQQDPQR. Residues 180 to 197 are compositionally biased toward low complexity; that stretch reads LASLSPLRKASLSSSSSL.

This sequence belongs to the FAM90 family.

The protein is Protein FAM90A16 of Homo sapiens (Human).